The chain runs to 186 residues: dCTP deaminase (186 aa).

Lysine 107–arginine 112 is a dCTP binding site. Glutamate 133 (proton donor/acceptor) is an active-site residue. DCTP-binding residues include glutamine 152, tyrosine 166, lysine 175, and glutamine 176.

The protein belongs to the dCTP deaminase family. Homotrimer.

It carries out the reaction dCTP + H2O + H(+) = dUTP + NH4(+). It functions in the pathway pyrimidine metabolism; dUMP biosynthesis; dUMP from dCTP (dUTP route): step 1/2. Catalyzes the deamination of dCTP to dUTP. The sequence is that of dCTP deaminase from Wolinella succinogenes (strain ATCC 29543 / DSM 1740 / CCUG 13145 / JCM 31913 / LMG 7466 / NCTC 11488 / FDC 602W) (Vibrio succinogenes).